We begin with the raw amino-acid sequence, 199 residues long: TATA-box-binding protein (199 aa).

2 repeat units span residues 10–86 and 101–177.

This sequence belongs to the TBP family.

General factor that plays a role in the activation of archaeal genes transcribed by RNA polymerase. Binds specifically to the TATA box promoter element which lies close to the position of transcription initiation. The sequence is that of TATA-box-binding protein from Pyrobaculum islandicum (strain DSM 4184 / JCM 9189 / GEO3).